The chain runs to 708 residues: Protein MICRORCHIDIA 5 (708 aa).

Over residues 1-11 (MAESGSTNPKS) the composition is skewed to polar residues. The interval 1 to 47 (MAESGSTNPKSPSVVPDSTLGGLKRDLRNYHDGDDSNNLSIKKSKTT) is disordered. Residues 23–34 (LKRDLRNYHDGD) are compositionally biased toward basic and acidic residues. A coiled-coil region spans residues 590–665 (SVNLEAELQK…LENRQEGVST (76 aa)). The Nuclear localization signal signature appears at 672–679 (ARRDVTED).

It belongs to the MORC ATPase protein family. As to quaternary structure, homodimer and heterodimer. Component of an RNA-directed DNA methylation (RdDM) complex. The cofactor is Mg(2+). Mn(2+) is required as a cofactor.

The protein localises to the nucleus. Its function is as follows. Exhibits ATPase activity. Binds DNA/RNA in a non-specific manner and exhibits endonuclease activity. Probably involved in DNA repair. Involved in RNA-directed DNA methylation (RdDM) as a component of the RdDM machinery and required for gene silencing. May also be involved in the regulation of chromatin architecture to maintain gene silencing. This chain is Protein MICRORCHIDIA 5, found in Arabidopsis thaliana (Mouse-ear cress).